We begin with the raw amino-acid sequence, 185 residues long: UPF0215 protein APE_0476.1 (185 aa).

Belongs to the UPF0215 family.

This Aeropyrum pernix (strain ATCC 700893 / DSM 11879 / JCM 9820 / NBRC 100138 / K1) protein is UPF0215 protein APE_0476.1.